Consider the following 177-residue polypeptide: ATP synthase subunit delta (177 aa).

It belongs to the ATPase delta chain family. As to quaternary structure, F-type ATPases have 2 components, F(1) - the catalytic core - and F(0) - the membrane proton channel. F(1) has five subunits: alpha(3), beta(3), gamma(1), delta(1), epsilon(1). F(0) has three main subunits: a(1), b(2) and c(10-14). The alpha and beta chains form an alternating ring which encloses part of the gamma chain. F(1) is attached to F(0) by a central stalk formed by the gamma and epsilon chains, while a peripheral stalk is formed by the delta and b chains.

It localises to the cell inner membrane. In terms of biological role, f(1)F(0) ATP synthase produces ATP from ADP in the presence of a proton or sodium gradient. F-type ATPases consist of two structural domains, F(1) containing the extramembraneous catalytic core and F(0) containing the membrane proton channel, linked together by a central stalk and a peripheral stalk. During catalysis, ATP synthesis in the catalytic domain of F(1) is coupled via a rotary mechanism of the central stalk subunits to proton translocation. Functionally, this protein is part of the stalk that links CF(0) to CF(1). It either transmits conformational changes from CF(0) to CF(1) or is implicated in proton conduction. The sequence is that of ATP synthase subunit delta from Serratia proteamaculans (strain 568).